The sequence spans 265 residues: 5'-nucleotidase SurE (265 aa).

A divalent metal cation is bound by residues D8, D9, S40, and N98.

It belongs to the SurE nucleotidase family. A divalent metal cation serves as cofactor.

The protein resides in the cytoplasm. It carries out the reaction a ribonucleoside 5'-phosphate + H2O = a ribonucleoside + phosphate. Functionally, nucleotidase that shows phosphatase activity on nucleoside 5'-monophosphates. This chain is 5'-nucleotidase SurE, found in Thermosynechococcus vestitus (strain NIES-2133 / IAM M-273 / BP-1).